The primary structure comprises 97 residues: Cytochrome c oxidase subunit 4 isoform 1, mitochondrial (97 aa).

Residues 1 to 22 (MLATRVFNLIGRRAISTSVCVR) constitute a mitochondrion transit peptide. Lysine 29 carries the N6-acetyllysine; alternate modification. At lysine 29 the chain carries N6-succinyllysine; alternate. N6-acetyllysine is present on lysine 53. Phosphoserine occurs at positions 56 and 58. Lysine 60 is modified (N6-acetyllysine; alternate). The residue at position 60 (lysine 60) is an N6-succinyllysine; alternate. An N6-acetyllysine modification is found at lysine 67.

It belongs to the cytochrome c oxidase IV family. Component of the cytochrome c oxidase (complex IV, CIV), a multisubunit enzyme composed of 14 subunits. The complex is composed of a catalytic core of 3 subunits MT-CO1, MT-CO2 and MT-CO3, encoded in the mitochondrial DNA, and 11 supernumerary subunits COX4I, COX5A, COX5B, COX6A, COX6B, COX6C, COX7A, COX7B, COX7C, COX8 and NDUFA4, which are encoded in the nuclear genome. The complex exists as a monomer or a dimer and forms supercomplexes (SCs) in the inner mitochondrial membrane with NADH-ubiquinone oxidoreductase (complex I, CI) and ubiquinol-cytochrome c oxidoreductase (cytochrome b-c1 complex, complex III, CIII), resulting in different assemblies (supercomplex SCI(1)III(2)IV(1) and megacomplex MCI(2)III(2)IV(2)). Interacts with PHB2; the interaction decreases in absence of SPHK2. Interacts with AFG1L. Interacts with ABCB7; this interaction allows the regulation of cellular iron homeostasis and cellular reactive oxygen species (ROS) levels in cardiomyocytes. Interacts with FLVCR2; this interaction occurs in the absence of heme and is disrupted upon heme binding. Interacts with IRGC.

It is found in the mitochondrion inner membrane. Its pathway is energy metabolism; oxidative phosphorylation. In terms of biological role, component of the cytochrome c oxidase, the last enzyme in the mitochondrial electron transport chain which drives oxidative phosphorylation. The respiratory chain contains 3 multisubunit complexes succinate dehydrogenase (complex II, CII), ubiquinol-cytochrome c oxidoreductase (cytochrome b-c1 complex, complex III, CIII) and cytochrome c oxidase (complex IV, CIV), that cooperate to transfer electrons derived from NADH and succinate to molecular oxygen, creating an electrochemical gradient over the inner membrane that drives transmembrane transport and the ATP synthase. Cytochrome c oxidase is the component of the respiratory chain that catalyzes the reduction of oxygen to water. Electrons originating from reduced cytochrome c in the intermembrane space (IMS) are transferred via the dinuclear copper A center (CU(A)) of subunit 2 and heme A of subunit 1 to the active site in subunit 1, a binuclear center (BNC) formed by heme A3 and copper B (CU(B)). The BNC reduces molecular oxygen to 2 water molecules using 4 electrons from cytochrome c in the IMS and 4 protons from the mitochondrial matrix. The protein is Cytochrome c oxidase subunit 4 isoform 1, mitochondrial (COX4I1) of Sus scrofa (Pig).